A 339-amino-acid chain; its full sequence is Tetraacyldisaccharide 4'-kinase (339 aa).

61–68 (TAGGTGKT) is an ATP binding site.

Belongs to the LpxK family.

It catalyses the reaction a lipid A disaccharide + ATP = a lipid IVA + ADP + H(+). Its pathway is glycolipid biosynthesis; lipid IV(A) biosynthesis; lipid IV(A) from (3R)-3-hydroxytetradecanoyl-[acyl-carrier-protein] and UDP-N-acetyl-alpha-D-glucosamine: step 6/6. Its function is as follows. Transfers the gamma-phosphate of ATP to the 4'-position of a tetraacyldisaccharide 1-phosphate intermediate (termed DS-1-P) to form tetraacyldisaccharide 1,4'-bis-phosphate (lipid IVA). This chain is Tetraacyldisaccharide 4'-kinase, found in Stenotrophomonas maltophilia (strain R551-3).